Consider the following 465-residue polypeptide: UDP-N-acetylmuramate--L-alanine ligase (465 aa).

118-124 (GTHGKTT) serves as a coordination point for ATP.

Belongs to the MurCDEF family.

It is found in the cytoplasm. It catalyses the reaction UDP-N-acetyl-alpha-D-muramate + L-alanine + ATP = UDP-N-acetyl-alpha-D-muramoyl-L-alanine + ADP + phosphate + H(+). It participates in cell wall biogenesis; peptidoglycan biosynthesis. Its function is as follows. Cell wall formation. This is UDP-N-acetylmuramate--L-alanine ligase from Ruegeria pomeroyi (strain ATCC 700808 / DSM 15171 / DSS-3) (Silicibacter pomeroyi).